The primary structure comprises 448 residues: uncharacterized protein (448 aa).

K280 is modified (N6-(pyridoxal phosphate)lysine).

This sequence belongs to the class-III pyridoxal-phosphate-dependent aminotransferase family.

The protein resides in the cytoplasm. It localises to the mitochondrion. This is an uncharacterized protein from Schizosaccharomyces pombe (strain 972 / ATCC 24843) (Fission yeast).